The sequence spans 31 residues: Cytochrome b6-f complex subunit 6 (31 aa).

Residues 4 to 24 traverse the membrane as a helical segment; the sequence is ITSYFGFLLAALTITSALLIG.

This sequence belongs to the PetL family. As to quaternary structure, the 4 large subunits of the cytochrome b6-f complex are cytochrome b6, subunit IV (17 kDa polypeptide, PetD), cytochrome f and the Rieske protein, while the 4 small subunits are PetG, PetL, PetM and PetN. The complex functions as a dimer.

It localises to the plastid. It is found in the chloroplast thylakoid membrane. Component of the cytochrome b6-f complex, which mediates electron transfer between photosystem II (PSII) and photosystem I (PSI), cyclic electron flow around PSI, and state transitions. PetL is important for photoautotrophic growth as well as for electron transfer efficiency and stability of the cytochrome b6-f complex. In Piper cenocladum (Ant piper), this protein is Cytochrome b6-f complex subunit 6.